A 366-amino-acid polypeptide reads, in one-letter code: Ribosomal RNA large subunit methyltransferase M (366 aa).

S-adenosyl-L-methionine-binding positions include Ser187, 220 to 223, Asp239, Asp259, and Asp276; that span reads SPGG. The Proton acceptor role is filled by Lys305.

The protein belongs to the class I-like SAM-binding methyltransferase superfamily. RNA methyltransferase RlmE family. RlmM subfamily. In terms of assembly, monomer.

Its subcellular location is the cytoplasm. The enzyme catalyses cytidine(2498) in 23S rRNA + S-adenosyl-L-methionine = 2'-O-methylcytidine(2498) in 23S rRNA + S-adenosyl-L-homocysteine + H(+). In terms of biological role, catalyzes the 2'-O-methylation at nucleotide C2498 in 23S rRNA. This is Ribosomal RNA large subunit methyltransferase M from Tolumonas auensis (strain DSM 9187 / NBRC 110442 / TA 4).